The primary structure comprises 145 residues: Large ribosomal subunit protein bL17 (145 aa).

It belongs to the bacterial ribosomal protein bL17 family. In terms of assembly, part of the 50S ribosomal subunit. Contacts protein L32.

The sequence is that of Large ribosomal subunit protein bL17 from Francisella tularensis subsp. tularensis (strain FSC 198).